A 173-amino-acid chain; its full sequence is Protein tyrosine phosphatase type IVA 1 (173 aa).

Residues 8-161 (APVEVTYKNM…YRPKMRLRFK (154 aa)) form the Tyrosine-protein phosphatase domain. Cys-49 and Cys-104 are oxidised to a cystine. Asp-72 (proton donor) is an active-site residue. The interaction with ATF5 stretch occupies residues 97–132 (GCCIAVHCVAGLGRAPVLVALALIEGGMKYEDAVQF). The active-site Phosphocysteine intermediate is the Cys-104. 105–110 (VAGLGR) provides a ligand contact to phosphate. Arg-110 provides a ligand contact to substrate. At Cys-170 the chain carries Cysteine methyl ester. Cys-170 carries the S-farnesyl cysteine lipid modification. Positions 171 to 173 (CIQ) are cleaved as a propeptide — removed in mature form.

The protein belongs to the protein-tyrosine phosphatase family. As to quaternary structure, homotrimer. Interacts with ATF5. Interacts with tubulin. Farnesylated. Farnesylation is required for membrane targeting. Unfarnesylated forms are shifted into the nucleus. In terms of tissue distribution, expressed in bone marrow, lymph nodes, T lymphocytes, spleen, thymus and tonsil. Overexpressed in tumor cell lines.

It is found in the cell membrane. The protein resides in the early endosome. Its subcellular location is the endoplasmic reticulum. It localises to the cytoplasm. The protein localises to the cytoskeleton. It is found in the spindle. The protein resides in the nucleus. The enzyme catalyses O-phospho-L-tyrosyl-[protein] + H2O = L-tyrosyl-[protein] + phosphate. With respect to regulation, inhibited by sodium orthovanadate and pentamidine. Its function is as follows. Protein tyrosine phosphatase which stimulates progression from G1 into S phase during mitosis. May play a role in the development and maintenance of differentiating epithelial tissues. Enhances cell proliferation, cell motility and invasive activity, and promotes cancer metastasis. This is Protein tyrosine phosphatase type IVA 1 (PTP4A1) from Homo sapiens (Human).